Consider the following 519-residue polypeptide: ATP synthase subunit beta, mitochondrial (519 aa).

Residues 1–21 constitute a mitochondrion transit peptide; sequence MLTRFRSAVLRGAVSITGARA. ATP contacts are provided by residues 184–191 and Arg216; that span reads GAGVGKTV.

It belongs to the ATPase alpha/beta chains family. F-type ATPases have 2 components, F(1) - the catalytic core - and F(o) - the membrane proton channel. F(1) has five subunits: alpha(3), beta(3), gamma(1), delta(1), epsilon(1), plus the additional subunit P18 (Tb427.05.1710) that is not present in F(1)F(o) ATP synthase from metazoa. Subunit P18 (Tb927.5.1710) interacts with the alpha subunit with a 1:1 stoichiometry; the interaction is direct. Subunit gamma is part of the central stalk. F(o) has three main subunits: a, b and c. The trypanosomal ATPase complex contains additional subunits that are not present in the F(1)F(o) ATP synthase from metazoa.

It is found in the mitochondrion. The protein resides in the mitochondrion inner membrane. The catalysed reaction is ATP + H2O + 4 H(+)(in) = ADP + phosphate + 5 H(+)(out). In terms of biological role, mitochondrial membrane ATP synthase (F(1)F(o) ATP synthase) produces ATP from ADP in the presence of a proton gradient across the membrane which is generated by electron transport complexes of the respiratory chain. F-type ATPases consist of two structural domains, F(1) - containing the extramembraneous catalytic core, and F(o) - containing the membrane proton channel, linked together by a central stalk and a peripheral stalk. During catalysis, ATP synthesis in the catalytic domain of F(1) is coupled via a rotary mechanism of the central stalk subunits to proton translocation. Subunits alpha and beta form the catalytic core in F(1). Rotation of the central stalk against the surrounding alpha(3)beta(3) subunits leads to hydrolysis of ATP in three separate catalytic sites on the beta subunits. Contrary to the procyclic, insect form that requires F(1)F(o) ATP synthase for ATP synthesis, the bloodstream form relies on ATP hydrolysis by F(1)F(o) ATP synthase to maintain its mitochondrial membrane potential. The sequence is that of ATP synthase subunit beta, mitochondrial from Trypanosoma brucei brucei.